The chain runs to 273 residues: Dermonecrotic toxin SdSicTox-betaIIB1bxi (273 aa).

His-4 is a catalytic residue. Mg(2+) contacts are provided by Glu-24 and Asp-26. His-40 acts as the Nucleophile in catalysis. Cystine bridges form between Cys-44–Cys-50 and Cys-46–Cys-189. A Mg(2+)-binding site is contributed by Asp-84.

It belongs to the arthropod phospholipase D family. Class II subfamily. It depends on Mg(2+) as a cofactor. In terms of tissue distribution, expressed by the venom gland.

The protein resides in the secreted. The enzyme catalyses an N-(acyl)-sphingosylphosphocholine = an N-(acyl)-sphingosyl-1,3-cyclic phosphate + choline. It carries out the reaction an N-(acyl)-sphingosylphosphoethanolamine = an N-(acyl)-sphingosyl-1,3-cyclic phosphate + ethanolamine. It catalyses the reaction a 1-acyl-sn-glycero-3-phosphocholine = a 1-acyl-sn-glycero-2,3-cyclic phosphate + choline. The catalysed reaction is a 1-acyl-sn-glycero-3-phosphoethanolamine = a 1-acyl-sn-glycero-2,3-cyclic phosphate + ethanolamine. Dermonecrotic toxins cleave the phosphodiester linkage between the phosphate and headgroup of certain phospholipids (sphingolipid and lysolipid substrates), forming an alcohol (often choline) and a cyclic phosphate. This toxin acts on sphingomyelin (SM). It may also act on ceramide phosphoethanolamine (CPE), lysophosphatidylcholine (LPC) and lysophosphatidylethanolamine (LPE), but not on lysophosphatidylserine (LPS), and lysophosphatidylglycerol (LPG). It acts by transphosphatidylation, releasing exclusively cyclic phosphate products as second products. Induces dermonecrosis, hemolysis, increased vascular permeability, edema, inflammatory response, and platelet aggregation. The polypeptide is Dermonecrotic toxin SdSicTox-betaIIB1bxi (Sicarius cf. damarensis (strain GJB-2008) (Six-eyed sand spider)).